Consider the following 531-residue polypeptide: GMP synthase [glutamine-hydrolyzing] (531 aa).

Residues 20–213 (KILIVDFGSQ…VRKVAGLKGD (194 aa)) form the Glutamine amidotransferase type-1 domain. The active-site Nucleophile is the cysteine 97. Catalysis depends on residues histidine 187 and glutamate 189. In terms of domain architecture, GMPS ATP-PPase spans 214–406 (WTMRAFREEA…LGLPDVFVGR (193 aa)). ATP is bound at residue 241–247 (SGGVDSA).

In terms of assembly, homodimer.

It catalyses the reaction XMP + L-glutamine + ATP + H2O = GMP + L-glutamate + AMP + diphosphate + 2 H(+). It functions in the pathway purine metabolism; GMP biosynthesis; GMP from XMP (L-Gln route): step 1/1. Catalyzes the synthesis of GMP from XMP. This Afipia carboxidovorans (strain ATCC 49405 / DSM 1227 / KCTC 32145 / OM5) (Oligotropha carboxidovorans) protein is GMP synthase [glutamine-hydrolyzing].